The primary structure comprises 329 residues: BTB/POZ domain-containing adapter for CUL3-mediated RhoA degradation protein 1 (329 aa).

The segment at 1-31 (MSAEASGPAPAAAECLESPSPSSVEPGSPSY) is disordered. In terms of domain architecture, BTB spans 41-109 (KYVKLNVGGS…LRDGSVPLPE (69 aa)).

Belongs to the BACURD family. As to quaternary structure, homotetramer; forms a two-fold symmetric tetramer in solution. Interacts with CUL3; interaction is direct and forms a 5:5 heterodecamer. Component of the BCR(KCTD13) E3 ubiquitin ligase complex, at least composed of CUL3, KCTD13/BACURD1 and RBX1. Interacts with RHOA; with a preference for RhoA-GDP. Interacts with POLD2 and PCNA. Interacts with SPRTN.

It is found in the nucleus. It functions in the pathway protein modification; protein ubiquitination. In terms of biological role, substrate-specific adapter of a BCR (BTB-CUL3-RBX1) E3 ubiquitin-protein ligase complex required for synaptic transmission. The BCR(KCTD13) E3 ubiquitin ligase complex mediates the ubiquitination of RHOA, leading to its degradation by the proteasome, thereby regulating the actin cytoskeleton and promoting synaptic transmission. This Mus musculus (Mouse) protein is BTB/POZ domain-containing adapter for CUL3-mediated RhoA degradation protein 1 (Kctd13).